A 766-amino-acid chain; its full sequence is Pentatricopeptide repeat-containing protein At3g61520, mitochondrial (766 aa).

Residues 1–30 (MSIMLSISRRRNSYILLNHSRFLRRFSYDV) constitute a mitochondrion transit peptide. PPR repeat units follow at residues 151 to 181 (TVVA…LDSN), 184 to 218 (NSQV…ESVF), 221 to 257 (NRIT…GVSP), 258 to 292 (NSVW…KTPL), 293 to 327 (EAPP…KIRP), 328 to 358 (DVVT…MRGK), 369 to 404 (DSIH…RCAP), 405 to 439 (NAVT…EIKP), 440 to 474 (NVVT…GVKG), 475 to 509 (NVVT…GCSP), 510 to 544 (DAKI…GFSL), 545 to 579 (DLLA…GKKP), 580 to 614 (DSIT…GLDP), 615 to 650 (TVTT…KVNP), 651 to 685 (NTVI…MVRP), and 686 to 720 (NVET…SCEP).

Belongs to the PPR family. P subfamily.

The protein resides in the mitochondrion. This chain is Pentatricopeptide repeat-containing protein At3g61520, mitochondrial, found in Arabidopsis thaliana (Mouse-ear cress).